The sequence spans 170 residues: Lipoprotein signal peptidase (170 aa).

The next 4 membrane-spanning stretches (helical) occupy residues 11–31 (LSWL…KFYF), 41–61 (IVVI…AAFS), 69–89 (WQRW…VVWL), and 95–115 (NETW…GNLY). Residues D125 and D144 contribute to the active site. The helical transmembrane segment at 136–156 (YFPAFNFADSAITVGAVMLAL) threads the bilayer.

It belongs to the peptidase A8 family.

The protein localises to the cell inner membrane. It catalyses the reaction Release of signal peptides from bacterial membrane prolipoproteins. Hydrolyzes -Xaa-Yaa-Zaa-|-(S,diacylglyceryl)Cys-, in which Xaa is hydrophobic (preferably Leu), and Yaa (Ala or Ser) and Zaa (Gly or Ala) have small, neutral side chains.. The protein operates within protein modification; lipoprotein biosynthesis (signal peptide cleavage). Its function is as follows. This protein specifically catalyzes the removal of signal peptides from prolipoproteins. The polypeptide is Lipoprotein signal peptidase (Pseudomonas fluorescens (strain Pf0-1)).